The sequence spans 376 residues: Probable dual-specificity RNA methyltransferase RlmN (376 aa).

The Proton acceptor role is filled by Glu96. In terms of domain architecture, Radical SAM core spans 102–346; sequence YPDRSTVCVS…CTVRVERGVE (245 aa). Cys109 and Cys351 are disulfide-bonded. Positions 116, 120, and 123 each coordinate [4Fe-4S] cluster. S-adenosyl-L-methionine contacts are provided by residues 171-172, Ser203, 226-228, and Asn308; these read GE and SLH. Catalysis depends on Cys351, which acts as the S-methylcysteine intermediate.

The protein belongs to the radical SAM superfamily. RlmN family. [4Fe-4S] cluster is required as a cofactor.

It localises to the cytoplasm. It carries out the reaction adenosine(2503) in 23S rRNA + 2 reduced [2Fe-2S]-[ferredoxin] + 2 S-adenosyl-L-methionine = 2-methyladenosine(2503) in 23S rRNA + 5'-deoxyadenosine + L-methionine + 2 oxidized [2Fe-2S]-[ferredoxin] + S-adenosyl-L-homocysteine. It catalyses the reaction adenosine(37) in tRNA + 2 reduced [2Fe-2S]-[ferredoxin] + 2 S-adenosyl-L-methionine = 2-methyladenosine(37) in tRNA + 5'-deoxyadenosine + L-methionine + 2 oxidized [2Fe-2S]-[ferredoxin] + S-adenosyl-L-homocysteine. In terms of biological role, specifically methylates position 2 of adenine 2503 in 23S rRNA and position 2 of adenine 37 in tRNAs. This is Probable dual-specificity RNA methyltransferase RlmN from Chloroflexus aurantiacus (strain ATCC 29366 / DSM 635 / J-10-fl).